Consider the following 232-residue polypeptide: Putative N-acetylmannosamine-6-phosphate 2-epimerase (232 aa).

This sequence belongs to the NanE family.

The enzyme catalyses an N-acyl-D-glucosamine 6-phosphate = an N-acyl-D-mannosamine 6-phosphate. The protein operates within amino-sugar metabolism; N-acetylneuraminate degradation; D-fructose 6-phosphate from N-acetylneuraminate: step 3/5. Functionally, converts N-acetylmannosamine-6-phosphate (ManNAc-6-P) to N-acetylglucosamine-6-phosphate (GlcNAc-6-P). The polypeptide is Putative N-acetylmannosamine-6-phosphate 2-epimerase (Borreliella burgdorferi (strain ZS7) (Borrelia burgdorferi)).